The primary structure comprises 147 residues: Neocarzinostatin (147 aa).

Positions 1-34 (MVPISIIRNRVAKVAVGSAAVLGLAVGFQTPAVA) are cleaved as a signal peptide. 2 cysteine pairs are disulfide-bonded: cysteine 71/cysteine 81 and cysteine 122/cysteine 127.

Belongs to the neocarzinostatin family.

NCS has antibiotic activity (for Gram-positive bacteria) and antitumor activity (for certain mouse tumors). NCS binds non-covalently to a chromophore which is the cytotoxic and mutagenic component of the antibiotic. The chromophore binds to DNA as a weak intercalator and causes single- and double-strand breaks. This Streptomyces carzinostaticus protein is Neocarzinostatin (ncsA).